We begin with the raw amino-acid sequence, 467 residues long: Glutamate--tRNA ligase (467 aa).

The 'HIGH' region motif lies at 12–22 (PSPTGYLHIGG). Residues 114 to 128 (EQEAKKEKPRYDGRW) show a composition bias toward basic and acidic residues. The tract at residues 114-140 (EQEAKKEKPRYDGRWRPAPGKTLPTPP) is disordered. Residues 244-248 (KLSKR) carry the 'KMSKS' region motif. Lys-247 is a binding site for ATP.

The protein belongs to the class-I aminoacyl-tRNA synthetase family. Glutamate--tRNA ligase type 1 subfamily. As to quaternary structure, monomer.

The protein resides in the cytoplasm. It carries out the reaction tRNA(Glu) + L-glutamate + ATP = L-glutamyl-tRNA(Glu) + AMP + diphosphate. Catalyzes the attachment of glutamate to tRNA(Glu) in a two-step reaction: glutamate is first activated by ATP to form Glu-AMP and then transferred to the acceptor end of tRNA(Glu). In Azoarcus sp. (strain BH72), this protein is Glutamate--tRNA ligase.